The primary structure comprises 500 residues: MDVFKQSEVWFVIGSQNLYGPKTLQQVMDNAHQVVNSLNNEAGLPVKLVLKPLVTTPDEITALCREANYDTACIGIMTWLHTFSPAKMWIGGLSILNKPLLQFHTQFNAQIPWKTMDMDFMNLNQTAHGGREFGFIGARMRQQHSVITGHWQDKEAHQRIGQWMRVAAAKQESQQLKVARFGDNMREVAVTEGDKVAAQIQFGYSVNAYGIGDLVAVVDAVSKGDIDTLVEEYEATYRFTDAVKLNGDKRENLLDAARIELGMTRFLEQGGFKAFTTNFENLYGLKQLPGLAVQRLMQQGYGFGGEGDWKTAALLRILKVMGTGLKGGTSFMEDYTYNFQPGNDLVVGSHMLEVCPSIAKEEKPLLDVQHLGIGGKADPARLIFSTPAGPALNASLIDMGNRFRLLVNVVDTVEQPHPLPKLPVARAIWQAQPSLATAAEAWIIAGGAHHTVFSQAVGVDELRLYAEMHGIEFLLIDNDTTLPAFKNEIRWNEVYYQLNR.

Residues E306, E333, H350, and H450 each contribute to the Mn(2+) site.

Belongs to the arabinose isomerase family. As to quaternary structure, homohexamer. It depends on Mn(2+) as a cofactor.

It carries out the reaction beta-L-arabinopyranose = L-ribulose. It participates in carbohydrate degradation; L-arabinose degradation via L-ribulose; D-xylulose 5-phosphate from L-arabinose (bacterial route): step 1/3. Catalyzes the conversion of L-arabinose to L-ribulose. The polypeptide is L-arabinose isomerase (Yersinia pestis (strain Pestoides F)).